Reading from the N-terminus, the 609-residue chain is Altered inheritance of mitochondria protein 9, mitochondrial (609 aa).

A mitochondrion-targeting transit peptide spans methionine 1 to arginine 24.

This sequence belongs to the AIM9 family.

Its subcellular location is the mitochondrion. This is Altered inheritance of mitochondria protein 9, mitochondrial (AIM9) from Meyerozyma guilliermondii (strain ATCC 6260 / CBS 566 / DSM 6381 / JCM 1539 / NBRC 10279 / NRRL Y-324) (Yeast).